The chain runs to 248 residues: DNA repair protein RecO (248 aa).

This sequence belongs to the RecO family.

In terms of biological role, involved in DNA repair and RecF pathway recombination. This chain is DNA repair protein RecO, found in Bradyrhizobium sp. (strain BTAi1 / ATCC BAA-1182).